We begin with the raw amino-acid sequence, 263 residues long: Lysine 5,6-aminomutase beta subunit (263 aa).

The B12-binding domain occupies 120–259; that stretch reads EVVMVGASTG…TFILKEMVQR (140 aa). Adenosylcob(III)alamin-binding positions include 130-136 and His133; that span reads TDAHTVG. Lys144 is modified (N6-(pyridoxal phosphate)lysine). Residues 185-192, 219-223, and 239-244 each bind adenosylcob(III)alamin; these read LVSQTVTQ, IAGGA, and FGPGKY.

Belongs to the KamE family. In terms of assembly, heterotetramer of 2 alpha and 2 beta subunits. It depends on adenosylcob(III)alamin as a cofactor. Pyridoxal 5'-phosphate serves as cofactor.

The catalysed reaction is (3S)-3,6-diaminohexanoate = (3S,5S)-3,5-diaminohexanoate. It carries out the reaction D-lysine = (2R,5S)-2,5-diaminohexanoate. It functions in the pathway amino-acid degradation; L-lysine degradation via acetate pathway. Catalyzes the migration of the L-beta-lysine and D-lysine epsilon amino group to the delta carbon to produce 3,5-diaminohexanoate and 2,5-diaminohexanoate, respectively. This Fusobacterium nucleatum subsp. nucleatum (strain ATCC 25586 / DSM 15643 / BCRC 10681 / CIP 101130 / JCM 8532 / KCTC 2640 / LMG 13131 / VPI 4355) protein is Lysine 5,6-aminomutase beta subunit.